A 272-amino-acid polypeptide reads, in one-letter code: tRNA pseudouridine synthase A (272 aa).

The Nucleophile role is filled by Asp52. Tyr110 lines the substrate pocket.

Belongs to the tRNA pseudouridine synthase TruA family. Homodimer.

The catalysed reaction is uridine(38/39/40) in tRNA = pseudouridine(38/39/40) in tRNA. Its function is as follows. Formation of pseudouridine at positions 38, 39 and 40 in the anticodon stem and loop of transfer RNAs. The chain is tRNA pseudouridine synthase A from Cupriavidus taiwanensis (strain DSM 17343 / BCRC 17206 / CCUG 44338 / CIP 107171 / LMG 19424 / R1) (Ralstonia taiwanensis (strain LMG 19424)).